The primary structure comprises 411 residues: MAAEAGGGEPLVKFVKLSGRAAGSKKKVRWFPVRRLFTHSCPSLRIPSRFLREGRRSPPARSGHRCVADNTNLYVFGGYNPDYDESGGPENEDYPLFRELWRYHFATGMWHQMGTDGHMPRELASMSLVLHGHNLLVFGGTGIPFGESNGNDVYVCNVKYKRWSKLNCRGKKPNRIYGQAMAIIHGFLYVFGGTTGYIYSTDLHRLDLSTREWIQLKPNNPPCDLPEERYRHEIAHDGQRIYVLGGGTSWTAYSLEKIHAYNFETNTWEDIPTKPYGNLGFPAARRCHSCVQIKNEVFICGGYNGLVILGDLWKLDLQTFQWTKLPALMPEPAYFHCAAVTPAGCMYIHGGVVNIQQNKRTGSLFKIWLVVPSLLELCWENLLKYFPHLCQLPTHQLLQLGLSQELIERLK.

Kelch repeat units follow at residues 72 to 133 (NLYV…LHGH), 135 to 186 (LLVF…IIHG), 187 to 239 (FLYV…HDGQ), 240 to 288 (RIYV…RRCH), 296 to 342 (EVFI…AVTP), and 345 to 388 (CMYI…YFPH).

This sequence belongs to the KLHDC10 family. As to quaternary structure, component of a CRL2 E3 ubiquitin-protein ligase complex, also named ECS (Elongin BC-CUL2/5-SOCS-box protein) complex, composed of CUL2, Elongin BC (ELOB and ELOC), RBX1 and substrate-specific adapter KLHDC10.

Its pathway is protein modification; protein ubiquitination. In terms of biological role, substrate-recognition component of a Cul2-RING (CRL2) E3 ubiquitin-protein ligase complex of the DesCEND (destruction via C-end degrons) pathway, which recognizes a C-degron located at the extreme C terminus of target proteins, leading to their ubiquitination and degradation. The C-degron recognized by the DesCEND pathway is usually a motif of less than ten residues and can be present in full-length proteins, truncated proteins or proteolytically cleaved forms. The CRL2(KLHDC10) complex specifically recognizes proteins with a proline-glycine (Pro-Gly) or an alanine tail (CAT tail) at the C-terminus, leading to their ubiquitination and degradation. The CRL2(KLHDC10) complex is involved in the ribosome-associated quality control (RQC) pathway, which mediates the extraction of incompletely synthesized nascent chains from stalled ribosomes: CRL2(KLHDC10) acts downstream of NEMF and recognizes CAT tails associated with stalled nascent chains, leading to their ubiquitination and degradation. The sequence is that of Kelch domain-containing protein 10 from Xenopus tropicalis (Western clawed frog).